The chain runs to 161 residues: MSNSSKKHLDLPYRPGVGMMILNADNHIFVGKRIDTKISAWQMPQGGIVPGETPSIAAMREMLEEIGSDKGYIIAESKCWYSYDVPSFLIPKLWNGNFRGQKQRWFLIRFTGNNEDININTSNPEFDQWRWASLDELLSIIIPFKRKLYQAVVKEFESLIQ.

A Nudix hydrolase domain is found at 12–154 (PYRPGVGMMI…KRKLYQAVVK (143 aa)). A Nudix box motif is present at residues 46–67 (GGIVPGETPSIAAMREMLEEIG).

The protein belongs to the Nudix hydrolase family. RppH subfamily. A divalent metal cation serves as cofactor.

Functionally, accelerates the degradation of transcripts by removing pyrophosphate from the 5'-end of triphosphorylated RNA, leading to a more labile monophosphorylated state that can stimulate subsequent ribonuclease cleavage. This Rickettsia rickettsii (strain Iowa) protein is RNA pyrophosphohydrolase.